The chain runs to 739 residues: DNA ligase (739 aa).

34 to 38 is a binding site for NAD(+); the sequence is DADYD. Basic and acidic residues predominate over residues 49-59; that stretch reads ARFPHLKRPDS. The disordered stretch occupies residues 49–70; sequence ARFPHLKRPDSPSEQVGARPGE. Residues 83-84 and glutamate 117 contribute to the NAD(+) site; that span reads SL. Lysine 119 acts as the N6-AMP-lysine intermediate in catalysis. NAD(+)-binding residues include arginine 140, glutamate 175, lysine 291, and lysine 315. 4 residues coordinate Zn(2+): cysteine 420, cysteine 423, cysteine 438, and cysteine 444. Residues 660–739 enclose the BRCT domain; sequence ARDSPVAGKT…DGWLKLIEGL (80 aa).

Belongs to the NAD-dependent DNA ligase family. LigA subfamily. Requires Mg(2+) as cofactor. Mn(2+) is required as a cofactor.

It carries out the reaction NAD(+) + (deoxyribonucleotide)n-3'-hydroxyl + 5'-phospho-(deoxyribonucleotide)m = (deoxyribonucleotide)n+m + AMP + beta-nicotinamide D-nucleotide.. DNA ligase that catalyzes the formation of phosphodiester linkages between 5'-phosphoryl and 3'-hydroxyl groups in double-stranded DNA using NAD as a coenzyme and as the energy source for the reaction. It is essential for DNA replication and repair of damaged DNA. The chain is DNA ligase from Ruegeria pomeroyi (strain ATCC 700808 / DSM 15171 / DSS-3) (Silicibacter pomeroyi).